The sequence spans 327 residues: Aspartate carbamoyltransferase catalytic subunit (327 aa).

Carbamoyl phosphate contacts are provided by Arg54 and Thr55. Lys82 serves as a coordination point for L-aspartate. Carbamoyl phosphate-binding residues include Arg104, His134, and Gln137. Residues Arg177 and Arg232 each coordinate L-aspartate. Gly280 and Pro281 together coordinate carbamoyl phosphate.

The protein belongs to the aspartate/ornithine carbamoyltransferase superfamily. ATCase family. As to quaternary structure, heterododecamer (2C3:3R2) of six catalytic PyrB chains organized as two trimers (C3), and six regulatory PyrI chains organized as three dimers (R2).

It catalyses the reaction carbamoyl phosphate + L-aspartate = N-carbamoyl-L-aspartate + phosphate + H(+). It functions in the pathway pyrimidine metabolism; UMP biosynthesis via de novo pathway; (S)-dihydroorotate from bicarbonate: step 2/3. Functionally, catalyzes the condensation of carbamoyl phosphate and aspartate to form carbamoyl aspartate and inorganic phosphate, the committed step in the de novo pyrimidine nucleotide biosynthesis pathway. The protein is Aspartate carbamoyltransferase catalytic subunit of Micrococcus luteus (strain ATCC 4698 / DSM 20030 / JCM 1464 / CCM 169 / CCUG 5858 / IAM 1056 / NBRC 3333 / NCIMB 9278 / NCTC 2665 / VKM Ac-2230) (Micrococcus lysodeikticus).